Reading from the N-terminus, the 753-residue chain is 5-methyltetrahydropteroyltriglutamate--homocysteine methyltransferase (753 aa).

Residues arginine 17–lysine 20 and lysine 117 each bind 5-methyltetrahydropteroyltri-L-glutamate. L-homocysteine contacts are provided by residues isoleucine 431–serine 433 and glutamate 484. Residues isoleucine 431 to serine 433 and glutamate 484 each bind L-methionine. 5-methyltetrahydropteroyltri-L-glutamate is bound by residues arginine 515–cysteine 516 and tryptophan 561. Aspartate 599 contributes to the L-homocysteine binding site. Position 599 (aspartate 599) interacts with L-methionine. Glutamate 605 lines the 5-methyltetrahydropteroyltri-L-glutamate pocket. The Zn(2+) site is built by histidine 641, cysteine 643, and glutamate 665. The active-site Proton donor is histidine 694. Cysteine 726 contacts Zn(2+).

This sequence belongs to the vitamin-B12 independent methionine synthase family. The cofactor is Zn(2+).

It carries out the reaction 5-methyltetrahydropteroyltri-L-glutamate + L-homocysteine = tetrahydropteroyltri-L-glutamate + L-methionine. The protein operates within amino-acid biosynthesis; L-methionine biosynthesis via de novo pathway; L-methionine from L-homocysteine (MetE route): step 1/1. Its function is as follows. Catalyzes the transfer of a methyl group from 5-methyltetrahydrofolate to homocysteine resulting in methionine formation. This is 5-methyltetrahydropteroyltriglutamate--homocysteine methyltransferase from Escherichia coli (strain UTI89 / UPEC).